Reading from the N-terminus, the 102-residue chain is Alpha-hemoglobin-stabilizing protein (102 aa).

It belongs to the AHSP family. Monomer. Forms a heterodimer with free alpha-hemoglobin. Does not bind beta-hemoglobin nor alpha(2)beta(2) hemoglobin A. As to expression, expressed in blood and bone marrow.

The protein localises to the cytoplasm. Functionally, acts as a chaperone to prevent the harmful aggregation of alpha-hemoglobin during normal erythroid cell development. Specifically protects free alpha-hemoglobin from precipitation. It is predicted to modulate pathological states of alpha-hemoglobin excess such as beta-thalassemia. The protein is Alpha-hemoglobin-stabilizing protein (AHSP) of Homo sapiens (Human).